We begin with the raw amino-acid sequence, 320 residues long: Cytochrome f (320 aa).

Positions 1–35 are cleaved as a signal peptide; the sequence is MQTRNTFSWIKEEITRSISVSLMIYIITGASISNA. Positions 36, 56, 59, and 60 each coordinate heme. Residues 286-306 form a helical membrane-spanning segment; it reads VQGLLFFLASIVFAQIFLVLK.

It belongs to the cytochrome f family. The 4 large subunits of the cytochrome b6-f complex are cytochrome b6, subunit IV (17 kDa polypeptide, petD), cytochrome f and the Rieske protein, while the 4 small subunits are PetG, PetL, PetM and PetN. The complex functions as a dimer. The cofactor is heme.

It localises to the plastid. Its subcellular location is the chloroplast thylakoid membrane. In terms of biological role, component of the cytochrome b6-f complex, which mediates electron transfer between photosystem II (PSII) and photosystem I (PSI), cyclic electron flow around PSI, and state transitions. This is Cytochrome f from Gossypium barbadense (Sea Island cotton).